The primary structure comprises 283 residues: Protein/nucleic acid deglycase HchA (283 aa).

Residues histidine 86, glutamate 91, and histidine 123 each coordinate Zn(2+). The active-site Nucleophile is cysteine 185.

It belongs to the peptidase C56 family. HchA subfamily. Homodimer.

It is found in the cytoplasm. The catalysed reaction is N(omega)-(1-hydroxy-2-oxopropyl)-L-arginyl-[protein] + H2O = lactate + L-arginyl-[protein] + H(+). It carries out the reaction N(6)-(1-hydroxy-2-oxopropyl)-L-lysyl-[protein] + H2O = lactate + L-lysyl-[protein] + H(+). It catalyses the reaction S-(1-hydroxy-2-oxopropyl)-L-cysteinyl-[protein] + H2O = lactate + L-cysteinyl-[protein] + H(+). The enzyme catalyses N(omega)-(1-hydroxy-2-oxoethyl)-L-arginyl-[protein] + H2O = L-arginyl-[protein] + glycolate + H(+). The catalysed reaction is N(6)-(1-hydroxy-2-oxoethyl)-L-lysyl-[protein] + H2O = glycolate + L-lysyl-[protein] + H(+). It carries out the reaction S-(1-hydroxy-2-oxoethyl)-L-cysteinyl-[protein] + H2O = glycolate + L-cysteinyl-[protein] + H(+). It catalyses the reaction N(2)-(1-hydroxy-2-oxopropyl)-dGTP + H2O = lactate + dGTP + H(+). The enzyme catalyses N(2)-(1-hydroxy-2-oxopropyl)-GTP + H2O = lactate + GTP + H(+). The catalysed reaction is N(2)-(1-hydroxy-2-oxopropyl)-GDP + H2O = lactate + GDP + H(+). It carries out the reaction N(2)-(1-hydroxy-2-oxopropyl)-GMP + H2O = lactate + GMP + H(+). It catalyses the reaction N(2)-(1-hydroxy-2-oxoethyl)-dGTP + H2O = dGTP + glycolate + H(+). The enzyme catalyses N(2)-(1-hydroxy-2-oxoethyl)-GTP + H2O = glycolate + GTP + H(+). The catalysed reaction is N(2)-(1-hydroxy-2-oxoethyl)-GDP + H2O = glycolate + GDP + H(+). It carries out the reaction N(2)-(1-hydroxy-2-oxoethyl)-GMP + H2O = glycolate + GMP + H(+). It catalyses the reaction an N(2)-(1-hydroxy-2-oxopropyl)-guanosine in RNA + H2O = a guanosine in RNA + lactate + H(+). The enzyme catalyses an N(2)-(1-hydroxy-2-oxopropyl)-2'-deoxyguanosine in DNA + H2O = a 2'-deoxyguanosine in DNA + lactate + H(+). The catalysed reaction is an N(2)-(1-hydroxy-2-oxoethyl)-guanosine in RNA + H2O = a guanosine in RNA + glycolate + H(+). It carries out the reaction an N(2)-(1-hydroxy-2-oxoethyl)-2'-deoxyguanosine in DNA + H2O = a 2'-deoxyguanosine in DNA + glycolate + H(+). Functionally, protein and nucleotide deglycase that catalyzes the deglycation of the Maillard adducts formed between amino groups of proteins or nucleotides and reactive carbonyl groups of glyoxals. Thus, functions as a protein deglycase that repairs methylglyoxal- and glyoxal-glycated proteins, and releases repaired proteins and lactate or glycolate, respectively. Deglycates cysteine, arginine and lysine residues in proteins, and thus reactivates these proteins by reversing glycation by glyoxals. Acts on early glycation intermediates (hemithioacetals and aminocarbinols), preventing the formation of Schiff bases and advanced glycation endproducts (AGE). Also functions as a nucleotide deglycase able to repair glycated guanine in the free nucleotide pool (GTP, GDP, GMP, dGTP) and in DNA and RNA. Is thus involved in a major nucleotide repair system named guanine glycation repair (GG repair), dedicated to reversing methylglyoxal and glyoxal damage via nucleotide sanitization and direct nucleic acid repair. Plays an important role in protecting cells from carbonyl stress. The chain is Protein/nucleic acid deglycase HchA from Shigella sonnei (strain Ss046).